The sequence spans 118 residues: Elicitin (118 aa).

The first 20 residues, 1–20, serve as a signal peptide directing secretion; the sequence is MNFRALFAATVAALVGSTSA. Disulfide bonds link cysteine 23/cysteine 91, cysteine 47/cysteine 76, and cysteine 71/cysteine 115.

This sequence belongs to the elicitin family.

It is found in the secreted. Its function is as follows. Induces local and distal defense responses (incompatible hypersensitive reaction) in plants from the solanaceae and cruciferae families. Elicits leaf necrosis and causes the accumulation of pathogenesis-related proteins. Might interact with the lipidic molecules of the plasma membrane. This Phytophthora nicotianae (Potato buckeye rot agent) protein is Elicitin (PARA1).